A 753-amino-acid chain; its full sequence is Cell cycle progression protein 1 (753 aa).

The Cytoplasmic portion of the chain corresponds to 1–218 (MSESSSDSDS…KRHFSRGLNK (218 aa)). The tract at residues 1–307 (MSESSSDSDS…QKKNLAAENQ (307 aa)) is interaction with MCF2L and SRC. A disordered region spans residues 57–211 (HGGEESSANN…EPSKEPSKRH (155 aa)). 2 stretches are compositionally biased toward polar residues: residues 62–78 (SSANNTSSVGETMLSSM) and 122–138 (QEVTIQEAPSSDDLNMG). The segment covering 176–185 (PRRRRNRKKT) has biased composition (basic residues). The residue at position 187 (Ser-187) is a Phosphoserine. Residues 190 to 201 (ESEEPPLAEPED) show a composition bias toward acidic residues. The helical; Signal-anchor for type II membrane protein transmembrane segment at 219–239 (CVILALVIAVSMGFGHFYGTI) threads the bilayer. Residues 240 to 753 (QIQKQLVRKT…YIKPCYYNSF (514 aa)) are Lumenal-facing. A coiled-coil region spans residues 298-449 (QKKNLAAENQ…EQQRSDLWER (152 aa)). Basic and acidic residues predominate over residues 457–467 (QHGKQETDGRK). Residues 457–484 (QHGKQETDGRKRGSRGSHRAKSKSKETF) are disordered. Residues 468–478 (RGSRGSHRAKS) are compositionally biased toward basic residues. Residues 503 to 529 (VRHHKEKIKQAKEAVKENLKKFSDSVK) adopt a coiled-coil conformation. Basic and acidic residues predominate over residues 553-563 (APKEAATEKTR). The disordered stretch occupies residues 553-606 (APKEAATEKTRTAYSYSSYSQQEAPNQNQNCRRPSAQRDGGREKPSHSEEIRKN). A compositionally biased stretch (polar residues) spans 573–584 (QQEAPNQNQNCR). Residues 591 to 605 (DGGREKPSHSEEIRK) show a composition bias toward basic and acidic residues.

It belongs to the CCPG1 family. As to quaternary structure, interacts with MCF2L. May interact with MCF2, ARHGEF1, BCR, VAV1 and FGD1, but not with TIAM1. Interacts with GTP-bound CDC42 and SRC.

It is found in the cytoplasmic granule membrane. Acts as an assembly platform for Rho protein signaling complexes. Limits guanine nucleotide exchange activity of MCF2L toward RHOA, which results in an inhibition of both its transcriptional activation ability and its transforming activity. Does not inhibit activity of MCF2L toward CDC42, or activity of MCF2 toward either RHOA or CDC42. May be involved in cell cycle regulation. This Mus musculus (Mouse) protein is Cell cycle progression protein 1 (Ccpg1).